Here is a 223-residue protein sequence, read N- to C-terminus: Phosphoribosylformylglycinamidine synthase subunit PurQ (223 aa).

Residues 4–223 (KIGVITFPGT…FLSAVGTIAA (220 aa)) enclose the Glutamine amidotransferase type-1 domain. Cysteine 87 functions as the Nucleophile in the catalytic mechanism. Active-site residues include histidine 195 and glutamate 197.

In terms of assembly, part of the FGAM synthase complex composed of 1 PurL, 1 PurQ and 2 PurS subunits.

It localises to the cytoplasm. It carries out the reaction N(2)-formyl-N(1)-(5-phospho-beta-D-ribosyl)glycinamide + L-glutamine + ATP + H2O = 2-formamido-N(1)-(5-O-phospho-beta-D-ribosyl)acetamidine + L-glutamate + ADP + phosphate + H(+). It catalyses the reaction L-glutamine + H2O = L-glutamate + NH4(+). It functions in the pathway purine metabolism; IMP biosynthesis via de novo pathway; 5-amino-1-(5-phospho-D-ribosyl)imidazole from N(2)-formyl-N(1)-(5-phospho-D-ribosyl)glycinamide: step 1/2. Its function is as follows. Part of the phosphoribosylformylglycinamidine synthase complex involved in the purines biosynthetic pathway. Catalyzes the ATP-dependent conversion of formylglycinamide ribonucleotide (FGAR) and glutamine to yield formylglycinamidine ribonucleotide (FGAM) and glutamate. The FGAM synthase complex is composed of three subunits. PurQ produces an ammonia molecule by converting glutamine to glutamate. PurL transfers the ammonia molecule to FGAR to form FGAM in an ATP-dependent manner. PurS interacts with PurQ and PurL and is thought to assist in the transfer of the ammonia molecule from PurQ to PurL. The polypeptide is Phosphoribosylformylglycinamidine synthase subunit PurQ (Corynebacterium glutamicum (strain ATCC 13032 / DSM 20300 / JCM 1318 / BCRC 11384 / CCUG 27702 / LMG 3730 / NBRC 12168 / NCIMB 10025 / NRRL B-2784 / 534)).